Reading from the N-terminus, the 368-residue chain is Agmatine deiminase (368 aa).

Cys-357 acts as the Amidino-cysteine intermediate in catalysis.

This sequence belongs to the agmatine deiminase family. Homodimer.

The enzyme catalyses agmatine + H2O = N-carbamoylputrescine + NH4(+). Its pathway is amine and polyamine biosynthesis; putrescine biosynthesis via agmatine pathway; N-carbamoylputrescine from agmatine: step 1/1. Its function is as follows. Mediates the hydrolysis of agmatine into N-carbamoylputrescine in the arginine decarboxylase (ADC) pathway of putrescine biosynthesis, a basic polyamine. The chain is Agmatine deiminase from Ectopseudomonas mendocina (strain ymp) (Pseudomonas mendocina).